Consider the following 78-residue polypeptide: MSTIEERVKKIIIEQLGVKEDDVKSAASFVDDLGADSLDTVELVMALEEEFDTEIPDEEAEKITTVQAAIDYILSHQE.

The Carrier domain maps to 2–77 (STIEERVKKI…AAIDYILSHQ (76 aa)). S37 carries the post-translational modification O-(pantetheine 4'-phosphoryl)serine.

It belongs to the acyl carrier protein (ACP) family. 4'-phosphopantetheine is transferred from CoA to a specific serine of apo-ACP by AcpS. This modification is essential for activity because fatty acids are bound in thioester linkage to the sulfhydryl of the prosthetic group.

Its subcellular location is the cytoplasm. It functions in the pathway lipid metabolism; fatty acid biosynthesis. Its function is as follows. Carrier of the growing fatty acid chain in fatty acid biosynthesis. This chain is Acyl carrier protein, found in Tolumonas auensis (strain DSM 9187 / NBRC 110442 / TA 4).